Here is a 269-residue protein sequence, read N- to C-terminus: Aquaporin-1 (269 aa).

Topologically, residues 1-11 are cytoplasmic; it reads MASEIKKKLFW. Residues 12-29 traverse the membrane as a helical segment; that stretch reads RAVVAEFLAMTLFVFISI. Residues 30–46 lie on the Extracellular side of the membrane; sequence GSALGFNYPLERNQTLV. The N-linked (GlcNAc...) asparagine glycan is linked to Asn42. Residues 47–65 traverse the membrane as a helical segment; that stretch reads QDNVKVSLAFGLSIATLAQ. Residues 66-68 lie on the Cytoplasmic side of the membrane; that stretch reads SVG. An intramembrane segment occupies 69-82; the sequence is HISGAHLNPAVTLG. An NPA 1 motif is present at residues 76-78; that stretch reads NPA. At 83–90 the chain is on the cytoplasmic side; it reads LLLSCQIS. Residues 91–109 form a helical membrane-spanning segment; that stretch reads ILRAVMYIIAQCVGAIVAS. Over 110 to 133 the chain is Extracellular; it reads AILSGITSSLLENSLGRNDLARGV. The chain crosses the membrane as a helical span at residues 134 to 153; it reads NSGQGLGIEIIGTLQLVLCV. Topologically, residues 154 to 163 are cytoplasmic; that stretch reads LATTDRRRRD. A helical transmembrane segment spans residues 164–181; the sequence is LGGSAPLAIGLSVALGHL. The Extracellular segment spans residues 182–186; that stretch reads LAIDY. The stretch at 187–199 is an intramembrane region; that stretch reads TGCGINPARSFGS. An NPA 2 motif is present at residues 192-194; sequence NPA. The Extracellular portion of the chain corresponds to 200-206; the sequence is AVLTRNF. Asn205 carries an N-linked (GlcNAc...) asparagine glycan. Residues 207 to 224 traverse the membrane as a helical segment; sequence SNHWIFWVGPFIGSALAV. The Cytoplasmic portion of the chain corresponds to 225–269; that stretch reads LIYDFILAPRSSDFTDRMKVWTSGQVEEYDLDADDINSRVEMKPK. A Phosphoserine modification is found at Ser247. At Tyr253 the chain carries Phosphotyrosine. A Phosphoserine modification is found at Ser262.

It belongs to the MIP/aquaporin (TC 1.A.8) family. As to quaternary structure, homotetramer; each monomer provides an independent water pore. Component of the ankyrin-1 complex in the erythrocyte, composed of ANK1, RHCE, RHAG, SLC4A1, EPB42, GYPA, GYPB and AQP1. Interacts with EPHB2; involved in endolymph production in the inner ear. Identified in a complex with STOM. Interacts (via the N-terminal) with ANK1 (via ANK 1-5 repeats). Interacts (via the C-terminal) with EPB42. As to expression, erythrocytes and renal tubules.

It is found in the cell membrane. The catalysed reaction is H2O(in) = H2O(out). The enzyme catalyses nitric oxide(out) = nitric oxide(in). It catalyses the reaction CO2(out) = CO2(in). It carries out the reaction glycerol(in) = glycerol(out). The catalysed reaction is H2O2(out) = H2O2(in). The enzyme catalyses K(+)(in) = K(+)(out). It catalyses the reaction Na(+)(in) = Na(+)(out). In terms of biological role, forms a water channel that facilitates the transport of water across cell membranes, playing a crucial role in water homeostasis in various tissues. Could also be permeable to small solutes including hydrogen peroxide, glycerol and gases such as amonnia (NH3), nitric oxide (NO) and carbon dioxide (CO2). Recruited to the ankyrin-1 complex, a multiprotein complex of the erythrocyte membrane, it could be part of a CO2 metabolon, linking facilitated diffusion of CO2 across the membrane, anion exchange of Cl(-)/HCO3(-) and interconversion of dissolved CO2 and carbonic acid in the cytosol. In vitro, it shows non-selective gated cation channel activity and may be permeable to cations like K(+) and Na(+) in vivo. This chain is Aquaporin-1, found in Rattus norvegicus (Rat).